We begin with the raw amino-acid sequence, 453 residues long: Phenolic glucoside malonyltransferase 1 (453 aa).

The active-site Proton acceptor is the H165. The HXXXD motif signature appears at 165 to 169 (HVAGD). Residues K254, H266, and 268–269 (TS) contribute to the malonyl-CoA site. D394 functions as the Proton acceptor in the catalytic mechanism. Residues 394 to 398 (DFGWG) carry the DFGWG motif motif.

Belongs to the plant acyltransferase family. Phenolic glucoside malonyltransferase subfamily. In terms of assembly, monomer. Highly expressed in flower. Also expressed in flower bud, stem, root and leaf.

It catalyses the reaction a flavonol 3-O-beta-D-glucoside + malonyl-CoA = a flavonol 3-O-(6-O-malonyl-beta-D-glucoside) + CoA. The enzyme catalyses a flavonol 7-O-beta-D-glucoside + malonyl-CoA = a flavonol 7-O-(6-O-malonyl-beta-D-glucoside) + CoA. Malonyltransferase with broad substrate specificity acting on phenolic glucosides including xenobiotic naphthols. Has activity against flavonoid 7-O-glucosides, flavonoid 3-O-glucosides and naphthol glucosides, and to a lesser extent against coumarin glucosides in vitro. Prefers malonyl-CoA as an acyl donor, but also active with succinyl-CoA and methylmalonyl-CoA, but not with acetyl-CoA. This Nicotiana tabacum (Common tobacco) protein is Phenolic glucoside malonyltransferase 1.